A 586-amino-acid chain; its full sequence is uncharacterized protein (586 aa).

The disordered stretch occupies residues 1–115; that stretch reads MRVLVAETGR…NTEKLAGRDD (115 aa). The span at 8-20 shows a compositional bias: basic and acidic residues; that stretch reads TGREDNVSVHSRE. Positions 21–31 are enriched in polar residues; sequence VSVNGSDSGTG. Positions 35–44 are enriched in basic and acidic residues; it reads YKLETDDEHP. Residues 76 to 107 are compositionally biased toward polar residues; it reads TGMNTEYNDDNSSLVNTPRDSTTYAETNSPNT. WD repeat units lie at residues 184-223, 253-291, 293-333, 335-374, 387-430, and 432-474; these read QFKE…ERRE, GHNA…SLAV, RHNE…ILHW, ELEY…YVSS, CRVT…LVLK, and SDAH…LINA.

Its subcellular location is the cytoplasm. The protein resides in the nucleus. This is an uncharacterized protein from Schizosaccharomyces pombe (strain 972 / ATCC 24843) (Fission yeast).